A 307-amino-acid polypeptide reads, in one-letter code: Elongation factor Ts (307 aa).

The interval 80-83 (TDFV) is involved in Mg(2+) ion dislocation from EF-Tu.

It belongs to the EF-Ts family.

The protein resides in the cytoplasm. In terms of biological role, associates with the EF-Tu.GDP complex and induces the exchange of GDP to GTP. It remains bound to the aminoacyl-tRNA.EF-Tu.GTP complex up to the GTP hydrolysis stage on the ribosome. The chain is Elongation factor Ts from Clostridium botulinum (strain Loch Maree / Type A3).